Consider the following 330-residue polypeptide: Cyclic AMP receptor-like protein E (330 aa).

The Extracellular portion of the chain corresponds to 1–10; it reads MLSLSSYVLN. A helical membrane pass occupies residues 11 to 31; it reads LVGSILCLIGCLFIIGHFFWI. The Cytoplasmic portion of the chain corresponds to 32-40; it reads PLLRTSLSR. Residues 41–61 traverse the membrane as a helical segment; sequence IIIYPTFILLLYDMVSFPSFI. The Extracellular portion of the chain corresponds to 62–85; the sequence is SKTADLYIERSTIICNFQEAIIQY. Residues 86–106 form a helical membrane-spanning segment; sequence LILSNFIWSVCISVNLLYLCF. At 107–116 the chain is on the cytoplasmic side; it reads SPNKNLKKNE. The chain crosses the membrane as a helical span at residues 117-137; sequence LLYHLCSWGIPLIVVVITKIP. Residues 138 to 156 are Extracellular-facing; the sequence is NMISDNGNQCRFKSPNYIK. A helical transmembrane segment spans residues 157–177; it reads FYLETILFIAFMLFNFIVAFI. Residues 178–213 lie on the Cytoplasmic side of the membrane; the sequence is TIKHIISGNLRESETTTTSVLFVNEKKITTKKIVWR. A helical membrane pass occupies residues 214-234; that stretch reads LLLYPSILSICYIMTLVLSIY. Residues 235 to 274 are Extracellular-facing; sequence QFSTESYGSGGAYANSINNKRNDKNTESGNSNNNNNSYIE. The N-linked (GlcNAc...) asparagine glycan is linked to Asn-269. The helical transmembrane segment at 275–295 threads the bilayer; the sequence is ILLYISKAIFLLQGFFNALVY. The Cytoplasmic segment spans residues 296 to 330; that stretch reads LRSSKLRDRYKKITIFRKIFWRDEADYQSINDGFN.

This sequence belongs to the G-protein coupled receptor 5 family.

The protein resides in the membrane. Functionally, receptor for cAMP. This chain is Cyclic AMP receptor-like protein E (crlE), found in Dictyostelium discoideum (Social amoeba).